Here is a 571-residue protein sequence, read N- to C-terminus: Oxysterol-binding protein 11 (571 aa).

The tract at residues 1-73 is disordered; that stretch reads MSNFFKKLVK…IGEQIDTLDD (73 aa). The span at 33-42 shows a compositional bias: polar residues; the sequence is NGNQVVPDTA. Positions 43-54 are enriched in low complexity; that stretch reads SSYSDDSNSLSD. A coiled-coil region spans residues 387–420; sequence YLEREENKLANKEKNKIEEREREKRKTRESRKEI.

This sequence belongs to the OSBP family.

The polypeptide is Oxysterol-binding protein 11 (osbK) (Dictyostelium discoideum (Social amoeba)).